We begin with the raw amino-acid sequence, 643 residues long: Phosphomethylpyrimidine synthase (643 aa).

Residues asparagine 248, methionine 277, tyrosine 306, histidine 342, 362–364 (SRG), 403–406 (DGLR), and glutamate 442 contribute to the substrate site. Position 446 (histidine 446) interacts with Zn(2+). Residue tyrosine 469 participates in substrate binding. Histidine 510 provides a ligand contact to Zn(2+). [4Fe-4S] cluster is bound by residues cysteine 590, cysteine 593, and cysteine 598.

Belongs to the ThiC family. Homodimer. [4Fe-4S] cluster is required as a cofactor.

The enzyme catalyses 5-amino-1-(5-phospho-beta-D-ribosyl)imidazole + S-adenosyl-L-methionine = 4-amino-2-methyl-5-(phosphooxymethyl)pyrimidine + CO + 5'-deoxyadenosine + formate + L-methionine + 3 H(+). The protein operates within cofactor biosynthesis; thiamine diphosphate biosynthesis. In terms of biological role, catalyzes the synthesis of the hydroxymethylpyrimidine phosphate (HMP-P) moiety of thiamine from aminoimidazole ribotide (AIR) in a radical S-adenosyl-L-methionine (SAM)-dependent reaction. The sequence is that of Phosphomethylpyrimidine synthase from Burkholderia cenocepacia (strain ATCC BAA-245 / DSM 16553 / LMG 16656 / NCTC 13227 / J2315 / CF5610) (Burkholderia cepacia (strain J2315)).